We begin with the raw amino-acid sequence, 123 residues long: NADH-quinone oxidoreductase subunit A (123 aa).

3 consecutive transmembrane segments (helical) span residues 6–26 (LTPYLPLAVVLLLAGGMAMLI), 66–86 (VVALLFIVFDVEAVFLYPWAV), and 93–113 (WFGYVEMLVFAVTLVVGLIYI).

This sequence belongs to the complex I subunit 3 family. As to quaternary structure, NDH-1 is composed of 14 different subunits. Subunits NuoA, H, J, K, L, M, N constitute the membrane sector of the complex.

It localises to the cell inner membrane. The catalysed reaction is a quinone + NADH + 5 H(+)(in) = a quinol + NAD(+) + 4 H(+)(out). In terms of biological role, NDH-1 shuttles electrons from NADH, via FMN and iron-sulfur (Fe-S) centers, to quinones in the respiratory chain. The immediate electron acceptor for the enzyme in this species is believed to be ubiquinone. Couples the redox reaction to proton translocation (for every two electrons transferred, four hydrogen ions are translocated across the cytoplasmic membrane), and thus conserves the redox energy in a proton gradient. The chain is NADH-quinone oxidoreductase subunit A from Myxococcus xanthus (strain DK1622).